A 135-amino-acid polypeptide reads, in one-letter code: ATP synthase epsilon chain (135 aa).

The protein belongs to the ATPase epsilon chain family. As to quaternary structure, F-type ATPases have 2 components, CF(1) - the catalytic core - and CF(0) - the membrane proton channel. CF(1) has five subunits: alpha(3), beta(3), gamma(1), delta(1), epsilon(1). CF(0) has three main subunits: a, b and c.

It localises to the cell inner membrane. In terms of biological role, produces ATP from ADP in the presence of a proton gradient across the membrane. This is ATP synthase epsilon chain from Brucella suis (strain ATCC 23445 / NCTC 10510).